Reading from the N-terminus, the 394-residue chain is Quinolinate synthase (394 aa).

Residues H57 and S74 each contribute to the iminosuccinate site. C121 is a binding site for [4Fe-4S] cluster. Iminosuccinate-binding positions include 153–155 and S174; that span reads YMN. [4Fe-4S] cluster is bound at residue C243. Residues 269–271 and T286 each bind iminosuccinate; that span reads HPE. C333 is a [4Fe-4S] cluster binding site.

This sequence belongs to the quinolinate synthase family. Type 3 subfamily. [4Fe-4S] cluster is required as a cofactor.

It localises to the cytoplasm. The catalysed reaction is iminosuccinate + dihydroxyacetone phosphate = quinolinate + phosphate + 2 H2O + H(+). Its pathway is cofactor biosynthesis; NAD(+) biosynthesis; quinolinate from iminoaspartate: step 1/1. Catalyzes the condensation of iminoaspartate with dihydroxyacetone phosphate to form quinolinate. The sequence is that of Quinolinate synthase from Corynebacterium glutamicum (strain ATCC 13032 / DSM 20300 / JCM 1318 / BCRC 11384 / CCUG 27702 / LMG 3730 / NBRC 12168 / NCIMB 10025 / NRRL B-2784 / 534).